We begin with the raw amino-acid sequence, 486 residues long: MFSPTALRPRYAKWLIATGLFLMLSGCVDKPNTLERVKEDGVLRVVTRNSPATYFQDRSGETGFEYELVKRFADDLGVELKIETADNLDDLFNQVGKPNGPVLAAAGLVSSEQRKKQVRFSRSYLEVTPQIIYRNGQSRPTDAGDLVGKKIMVLKGSTHAEQLAELKQKYPGIQYEESDAVEVVDLLRMVDEGQIDLTLVDSNEVAMNQVYFTNIRVAFDLGDARSQSWAVAAGEDNSLLNEINSYLDKVQKNGTLQRLKDRYYGHVDVLGYMGATTFAQHLQQRLPKYEQHFKAYAKKEKVDWRLLAAIGYQESLWQPAVTSKTGVRGLMMLTQNTAQAMGVSNRLDPKQSIMGGAKYLAYMKDQLDESIQEPDRTWFALAAYNVGSGHLDDARKLAAKEGLNPDKWLDVKKILPRLSQKQWYSKTRYGYARGGEPVHFVANIRRYYDILTWVTQPQLEGDQVAEGNLHVPGIDKSKPAQEPAPL.

An N-terminal signal peptide occupies residues 1-29; it reads MFSPTALRPRYAKWLIATGLFLMLSGCVD. Residues 30 to 267 form a non-LT domain region; it reads KPNTLERVKE…RLKDRYYGHV (238 aa). The segment at 268–486 is LT domain; that stretch reads DVLGYMGATT…SKPAQEPAPL (219 aa). The active site involves E314.

It in the N-terminal section; belongs to the bacterial solute-binding protein 3 family. This sequence in the C-terminal section; belongs to the transglycosylase Slt family.

The protein localises to the cell outer membrane. The enzyme catalyses Exolytic cleavage of the (1-&gt;4)-beta-glycosidic linkage between N-acetylmuramic acid (MurNAc) and N-acetylglucosamine (GlcNAc) residues in peptidoglycan, from either the reducing or the non-reducing ends of the peptidoglycan chains, with concomitant formation of a 1,6-anhydrobond in the MurNAc residue.. Its function is as follows. Murein-degrading enzyme that degrades murein glycan strands and insoluble, high-molecular weight murein sacculi, with the concomitant formation of a 1,6-anhydromuramoyl product. Lytic transglycosylases (LTs) play an integral role in the metabolism of the peptidoglycan (PG) sacculus. Their lytic action creates space within the PG sacculus to allow for its expansion as well as for the insertion of various structures such as secretion systems and flagella. This is Membrane-bound lytic murein transglycosylase F from Pseudomonas fluorescens (strain Pf0-1).